The primary structure comprises 225 residues: ATP phosphoribosyltransferase (225 aa).

It belongs to the ATP phosphoribosyltransferase family. Short subfamily. As to quaternary structure, heteromultimer composed of HisG and HisZ subunits.

The protein localises to the cytoplasm. It carries out the reaction 1-(5-phospho-beta-D-ribosyl)-ATP + diphosphate = 5-phospho-alpha-D-ribose 1-diphosphate + ATP. Its pathway is amino-acid biosynthesis; L-histidine biosynthesis; L-histidine from 5-phospho-alpha-D-ribose 1-diphosphate: step 1/9. In terms of biological role, catalyzes the condensation of ATP and 5-phosphoribose 1-diphosphate to form N'-(5'-phosphoribosyl)-ATP (PR-ATP). Has a crucial role in the pathway because the rate of histidine biosynthesis seems to be controlled primarily by regulation of HisG enzymatic activity. The protein is ATP phosphoribosyltransferase of Herminiimonas arsenicoxydans.